The following is a 274-amino-acid chain: Large ribosomal subunit protein uL2 (274 aa).

Residues 222–257 form a disordered region; the sequence is GVAMNPVDHPHGGGEGRTSGGRHPVSPWGVPTKGYK.

Belongs to the universal ribosomal protein uL2 family. Part of the 50S ribosomal subunit. Forms a bridge to the 30S subunit in the 70S ribosome.

One of the primary rRNA binding proteins. Required for association of the 30S and 50S subunits to form the 70S ribosome, for tRNA binding and peptide bond formation. It has been suggested to have peptidyltransferase activity; this is somewhat controversial. Makes several contacts with the 16S rRNA in the 70S ribosome. The polypeptide is Large ribosomal subunit protein uL2 (Nitrosococcus oceani (strain ATCC 19707 / BCRC 17464 / JCM 30415 / NCIMB 11848 / C-107)).